A 607-amino-acid polypeptide reads, in one-letter code: Arginine--tRNA ligase, cytoplasmic (607 aa).

N-acetylalanine is present on A2. S15 bears the Phosphoserine mark. Interaction with tRNA regions lie at residues 59-60 (EW) and 106-111 (NGPFIQ). L-arginine contacts are provided by residues 148–153 (EFSSPN), H162, Y347, D351, and Q375. Residues 151–162 (SPNIAKPFHAGH) carry the 'HIGH' region motif. The tract at residues 484-498 (DTGPYLQYAHSRLRS) is interaction with tRNA.

Belongs to the class-I aminoacyl-tRNA synthetase family. As to quaternary structure, monomer.

The protein resides in the cytoplasm. Its subcellular location is the cytosol. The enzyme catalyses tRNA(Arg) + L-arginine + ATP = L-arginyl-tRNA(Arg) + AMP + diphosphate. Its function is as follows. Forms part of a macromolecular complex that catalyzes the attachment of specific amino acids to cognate tRNAs during protein synthesis. This is Arginine--tRNA ligase, cytoplasmic from Saccharomyces cerevisiae (strain ATCC 204508 / S288c) (Baker's yeast).